The following is a 502-amino-acid chain: NAD(P)H-quinone oxidoreductase chain 4, chloroplastic (502 aa).

14 helical membrane passes run 4–24 (FPWL…IFFV), 37–57 (YTIC…CYHF), 86–106 (GLSI…TLAA), 113–131 (SRLF…VGSF), 136–156 (LLLF…LLSM), 169–189 (FILY…GMGL), 210–230 (GLEI…SPII), 244–264 (HYST…YGLV), 274–294 (AHSI…IYAA), 307–327 (IAYS…SITD), 332–352 (GAIL…FLAG), 388–408 (LALP…GIIT), 418–438 (IVIS…SLSM), and 464–484 (LFVS…PDFV).

This sequence belongs to the complex I subunit 4 family.

It localises to the plastid. The protein localises to the chloroplast thylakoid membrane. It catalyses the reaction a plastoquinone + NADH + (n+1) H(+)(in) = a plastoquinol + NAD(+) + n H(+)(out). The enzyme catalyses a plastoquinone + NADPH + (n+1) H(+)(in) = a plastoquinol + NADP(+) + n H(+)(out). The chain is NAD(P)H-quinone oxidoreductase chain 4, chloroplastic from Calycanthus floridus var. glaucus (Eastern sweetshrub).